Here is a 337-residue protein sequence, read N- to C-terminus: DNA-directed RNA polymerase subunit alpha (337 aa).

Residues 1 to 233 (MVREKVTVST…DLFIPFLHME (233 aa)) are alpha N-terminal domain (alpha-NTD). Residues 265–337 (KKIALKSIFI…FVIDLAKNKF (73 aa)) form an alpha C-terminal domain (alpha-CTD) region.

The protein belongs to the RNA polymerase alpha chain family. In plastids the minimal PEP RNA polymerase catalytic core is composed of four subunits: alpha, beta, beta', and beta''. When a (nuclear-encoded) sigma factor is associated with the core the holoenzyme is formed, which can initiate transcription.

The protein localises to the plastid. It is found in the chloroplast. It carries out the reaction RNA(n) + a ribonucleoside 5'-triphosphate = RNA(n+1) + diphosphate. DNA-dependent RNA polymerase catalyzes the transcription of DNA into RNA using the four ribonucleoside triphosphates as substrates. This chain is DNA-directed RNA polymerase subunit alpha, found in Nicotiana sylvestris (Wood tobacco).